We begin with the raw amino-acid sequence, 185 residues long: Flavodoxin (185 aa).

Positions Val-4–Ala-159 constitute a Flavodoxin-like domain.

It belongs to the flavodoxin family. Requires FMN as cofactor.

Functionally, low-potential electron donor to a number of redox enzymes. The sequence is that of Flavodoxin (fldA) from Aquifex aeolicus (strain VF5).